The following is a 201-amino-acid chain: Large ribosomal subunit protein bL25 (201 aa).

It belongs to the bacterial ribosomal protein bL25 family. CTC subfamily. Part of the 50S ribosomal subunit; part of the 5S rRNA/L5/L18/L25 subcomplex. Contacts the 5S rRNA. Binds to the 5S rRNA independently of L5 and L18.

Functionally, this is one of the proteins that binds to the 5S RNA in the ribosome where it forms part of the central protuberance. This Chlorobaculum parvum (strain DSM 263 / NCIMB 8327) (Chlorobium vibrioforme subsp. thiosulfatophilum) protein is Large ribosomal subunit protein bL25.